A 159-amino-acid chain; its full sequence is Phosphopantetheine adenylyltransferase (159 aa).

Threonine 10 serves as a coordination point for substrate. ATP contacts are provided by residues 10–11 and histidine 18; that span reads TF. Residues lysine 42, methionine 74, and arginine 88 each contribute to the substrate site. ATP contacts are provided by residues 89–91, glutamate 99, and 124–130; these read GLR and WSFISSS.

This sequence belongs to the bacterial CoaD family. In terms of assembly, homohexamer. Mg(2+) serves as cofactor.

It is found in the cytoplasm. It carries out the reaction (R)-4'-phosphopantetheine + ATP + H(+) = 3'-dephospho-CoA + diphosphate. Its pathway is cofactor biosynthesis; coenzyme A biosynthesis; CoA from (R)-pantothenate: step 4/5. In terms of biological role, reversibly transfers an adenylyl group from ATP to 4'-phosphopantetheine, yielding dephospho-CoA (dPCoA) and pyrophosphate. The polypeptide is Phosphopantetheine adenylyltransferase (Yersinia pestis).